A 187-amino-acid polypeptide reads, in one-letter code: Holliday junction branch migration complex subunit RuvA (187 aa).

The domain I stretch occupies residues 1 to 64; it reads MIEYIRGIIE…EDGFQIFGFK (64 aa). The segment at 65–136 is domain II; sequence RKEELELFEK…ELKDKVPKEV (72 aa). A flexible linker region spans residues 136–139; that stretch reads VVVP. The interval 140-187 is domain III; it reads KEDSLLNEALEALLALGYTKSEAIYALSDVNCESVEQAVKEALKKLAK.

Belongs to the RuvA family. As to quaternary structure, homotetramer. Forms an RuvA(8)-RuvB(12)-Holliday junction (HJ) complex. HJ DNA is sandwiched between 2 RuvA tetramers; dsDNA enters through RuvA and exits via RuvB. An RuvB hexamer assembles on each DNA strand where it exits the tetramer. Each RuvB hexamer is contacted by two RuvA subunits (via domain III) on 2 adjacent RuvB subunits; this complex drives branch migration. In the full resolvosome a probable DNA-RuvA(4)-RuvB(12)-RuvC(2) complex forms which resolves the HJ.

Its subcellular location is the cytoplasm. In terms of biological role, the RuvA-RuvB-RuvC complex processes Holliday junction (HJ) DNA during genetic recombination and DNA repair, while the RuvA-RuvB complex plays an important role in the rescue of blocked DNA replication forks via replication fork reversal (RFR). RuvA specifically binds to HJ cruciform DNA, conferring on it an open structure. The RuvB hexamer acts as an ATP-dependent pump, pulling dsDNA into and through the RuvAB complex. HJ branch migration allows RuvC to scan DNA until it finds its consensus sequence, where it cleaves and resolves the cruciform DNA. The protein is Holliday junction branch migration complex subunit RuvA of Caldanaerobacter subterraneus subsp. tengcongensis (strain DSM 15242 / JCM 11007 / NBRC 100824 / MB4) (Thermoanaerobacter tengcongensis).